The primary structure comprises 155 residues: MKLQLVAVGTKMPDWVQTGFTEYLRRFPKDMPFELIEIPAGKRGKNADIKRILDKEGEQMLAAAGKNRIVTLDIPGKPWDTPQLATELERWKLDGRDVSLLIGGPEGLSPACKAAAEQSWSLSALTLPHPLVRVLVAESLYRAWSITTNHPYHRE.

S-adenosyl-L-methionine-binding positions include Leu72, Gly103, and 122 to 127 (LSALTL).

It belongs to the RNA methyltransferase RlmH family. In terms of assembly, homodimer.

The protein localises to the cytoplasm. It catalyses the reaction pseudouridine(1915) in 23S rRNA + S-adenosyl-L-methionine = N(3)-methylpseudouridine(1915) in 23S rRNA + S-adenosyl-L-homocysteine + H(+). Functionally, specifically methylates the pseudouridine at position 1915 (m3Psi1915) in 23S rRNA. The chain is Ribosomal RNA large subunit methyltransferase H from Citrobacter koseri (strain ATCC BAA-895 / CDC 4225-83 / SGSC4696).